A 103-amino-acid polypeptide reads, in one-letter code: Large ribosomal subunit protein uL24 (103 aa).

The protein belongs to the universal ribosomal protein uL24 family. In terms of assembly, part of the 50S ribosomal subunit.

In terms of biological role, one of two assembly initiator proteins, it binds directly to the 5'-end of the 23S rRNA, where it nucleates assembly of the 50S subunit. Functionally, one of the proteins that surrounds the polypeptide exit tunnel on the outside of the subunit. The sequence is that of Large ribosomal subunit protein uL24 from Pasteurella multocida (strain Pm70).